The sequence spans 213 residues: Pyrrolidone-carboxylate peptidase (213 aa).

Residues E78, C141, and H165 contribute to the active site.

This sequence belongs to the peptidase C15 family. Homotetramer.

Its subcellular location is the cytoplasm. It catalyses the reaction Release of an N-terminal pyroglutamyl group from a polypeptide, the second amino acid generally not being Pro.. Its function is as follows. Removes 5-oxoproline from various penultimate amino acid residues except L-proline. This chain is Pyrrolidone-carboxylate peptidase, found in Enterococcus faecalis (strain ATCC 700802 / V583).